The chain runs to 233 residues: Small ribosomal subunit protein uS2 (233 aa).

Belongs to the universal ribosomal protein uS2 family.

The chain is Small ribosomal subunit protein uS2 from Clostridium acetobutylicum (strain ATCC 824 / DSM 792 / JCM 1419 / IAM 19013 / LMG 5710 / NBRC 13948 / NRRL B-527 / VKM B-1787 / 2291 / W).